An 83-amino-acid polypeptide reads, in one-letter code: U4-theraphotoxin-Hhn1x (83 aa).

A signal peptide spans 1–20 (MTLIAILTCAAALVLHTTAA). The propeptide occupies 21 to 46 (EELEAESQLMEVGMPDTELEAVDEER). Intrachain disulfides connect Cys50–Cys64, Cys54–Cys75, and Cys69–Cys80.

Belongs to the neurotoxin 12 (Hwtx-2) family. 02 (Hwtx-2) subfamily. As to expression, expressed by the venom gland.

Its subcellular location is the secreted. Postsynaptic neurotoxin. The sequence is that of U4-theraphotoxin-Hhn1x from Cyriopagopus hainanus (Chinese bird spider).